Here is a 440-residue protein sequence, read N- to C-terminus: Transposon Ty1-LR2 Gag polyprotein (440 aa).

Polar residues-rich tracts occupy residues 1–23 (MESQQLSQHSPISHGSACASVTS), 48–60 (TKANSQQTTTPAS), and 127–152 (QSQFPQYPSSVGTPLSTPSPESGNTF). Disordered regions lie at residues 1–93 (MESQ…MMTQ), 126–174 (PQSQ…PPPM), and 352–440 (GSRN…PGTY). The span at 153 to 165 (TDSSSADSDMTST) shows a compositional bias: low complexity. The segment at 299–401 (NNGIHINNKV…NSKSKTARAH (103 aa)) is RNA-binding. Low complexity predominate over residues 402–418 (NVSTSNNSPSTDNDSIS). A Phosphoserine modification is found at Ser-416. The segment covering 419–428 (KSTTEPIQLN) has biased composition (polar residues). The span at 429 to 440 (NKHDLHLRPGTY) shows a compositional bias: basic and acidic residues.

As to quaternary structure, homotrimer.

It is found in the cytoplasm. In terms of biological role, capsid protein (CA) is the structural component of the virus-like particle (VLP), forming the shell that encapsulates the retrotransposons dimeric RNA genome. The particles are assembled from trimer-clustered units and there are holes in the capsid shells that allow for the diffusion of macromolecules. CA also has nucleocapsid-like chaperone activity, promoting primer tRNA(i)-Met annealing to the multipartite primer-binding site (PBS), dimerization of Ty1 RNA and initiation of reverse transcription. The protein is Transposon Ty1-LR2 Gag polyprotein (TY1A-LR2) of Saccharomyces cerevisiae (strain ATCC 204508 / S288c) (Baker's yeast).